A 599-amino-acid chain; its full sequence is Aspartate--tRNA(Asp/Asn) ligase (599 aa).

E172 provides a ligand contact to L-aspartate. The segment at 196–199 is aspartate; the sequence is QLFK. An L-aspartate-binding site is contributed by R218. ATP contacts are provided by residues 218–220 and Q227; that span reads RDE. Position 451 (H451) interacts with L-aspartate. Residue E485 participates in ATP binding. R492 lines the L-aspartate pocket. 537-540 provides a ligand contact to ATP; sequence GLDR.

This sequence belongs to the class-II aminoacyl-tRNA synthetase family. Type 1 subfamily. Homodimer.

Its subcellular location is the cytoplasm. The catalysed reaction is tRNA(Asx) + L-aspartate + ATP = L-aspartyl-tRNA(Asx) + AMP + diphosphate. Functionally, aspartyl-tRNA synthetase with relaxed tRNA specificity since it is able to aspartylate not only its cognate tRNA(Asp) but also tRNA(Asn). Reaction proceeds in two steps: L-aspartate is first activated by ATP to form Asp-AMP and then transferred to the acceptor end of tRNA(Asp/Asn). The chain is Aspartate--tRNA(Asp/Asn) ligase from Dechloromonas aromatica (strain RCB).